The primary structure comprises 418 residues: MDQNLSGLDCLSEPDEKRWPDGKRKRKNSQCMGKSGMSGDSLVSLPPAGYIPSYLDKDEPCVVCSDKATGYHYRCITCEGCKGFFRRTIQKNLHPSYSCKYDGCCIIDKITRNQCQLCRFKKCIAVGMAMDLVLDDSKRVAKRKLIEENRVRRRKEEMIKTLQQRPEPSSEEWELIRIVTEAHRSTNAQGSHWKQRRKFLPEDIGQSPMASMPDGDKVDLEAFSEFTKIITPAITRVVDFAKKLPMFSELTCEDQIILLKGCCMEIMSLRAAVRYDPDSETLTLSGEMAVKREQLKNGGLGVVSDAIFDLGRSLAAFNLDDTEVALLQAVLLMSSDRTGLICTDKIEKCQETYLLAFEHYINHRKHNIPHFWPKLLMKVTDLRMIGACHASRFLHMKVECPTELFPPLFLEVFEDQEV.

A disordered region spans residues 1–40; the sequence is MDQNLSGLDCLSEPDEKRWPDGKRKRKNSQCMGKSGMSGD. Residues 1 to 60 are modulating; sequence MDQNLSGLDCLSEPDEKRWPDGKRKRKNSQCMGKSGMSGDSLVSLPPAGYIPSYLDKDEP. 2 NR C4-type zinc fingers span residues 61-81 and 99-123; these read CVVCSDKATGYHYRCITCEGC and CKYDGCCIIDKITRNQCQLCRFKKC. Residues 61 to 128 constitute a DNA-binding region (nuclear receptor); the sequence is CVVCSDKATG…RFKKCIAVGM (68 aa). The NR LBD domain occupies 171–415; it reads EEWELIRIVT…PPLFLEVFED (245 aa).

It belongs to the nuclear hormone receptor family. NR1 subfamily. As to quaternary structure, binds to thyroid hormone receptor element (TRE) weakly as homodimers and monomers, but binds TRE with much higher affinity as heterodimers with retinoid X receptors. Can bind DNA as a heterodimer with either rxra or rxrg.

The protein localises to the nucleus. Functionally, high affinity receptor for triiodothyronine (T3). The chain is Thyroid hormone receptor alpha-B (thra-b) from Xenopus laevis (African clawed frog).